Consider the following 128-residue polypeptide: D-ribose pyranase (128 aa).

His-20 functions as the Proton donor in the catalytic mechanism. Substrate contacts are provided by residues Asp-28, His-95, and 117-119 (YSN).

Belongs to the RbsD / FucU family. RbsD subfamily. Homodecamer.

It localises to the cytoplasm. The enzyme catalyses beta-D-ribopyranose = beta-D-ribofuranose. It participates in carbohydrate metabolism; D-ribose degradation; D-ribose 5-phosphate from beta-D-ribopyranose: step 1/2. Its function is as follows. Catalyzes the interconversion of beta-pyran and beta-furan forms of D-ribose. The sequence is that of D-ribose pyranase from Thermosipho africanus (strain TCF52B).